Consider the following 404-residue polypeptide: Protrudin (404 aa).

Residues 1–25 (MQSSDRDLSGPEASPSVMPEVLSEC) form a disordered region. The Cytoplasmic segment spans residues 1-63 (MQSSDRDLSG…LKDAGDGVRY (63 aa)). A sufficient for homooligomerization region spans residues 1-92 (MQSSDRDLSG…LFLTLNEGAW (92 aa)). The tract at residues 1-205 (MQSSDRDLSG…LYLLPLCWVL (205 aa)) is sufficient for localization to endoplasmic reticulum tubular network and for interactions with REEP1, REEP5, ATL1, ATL2, ATL3 and SPAST. Residues 51 to 64 (LEPLKDAGDGVRYL) form a necessary for interaction with RAB11A and function in neurite outgrowth region. Residues 64–85 (LLRWQMPLCSLLTCLGLNILFL) form a helical membrane-spanning segment. Residues 86–90 (TLNEG) lie on the Lumenal side of the membrane. Residues 91–109 (AWYSVGALIISVPALLGYL) traverse the membrane as a helical segment. Residues 110–187 (QEVCRAQLPE…NPVVSSQFYG (78 aa)) are Cytoplasmic-facing. The helical intramembrane region spans 188–208 (ALLGMVCMLYLLPLCWVLALL). The Cytoplasmic segment spans residues 209-404 (NSTLFLGNGE…CASCNQTLSK (196 aa)). Positions 259–299 (DSTPAPTPTEDLTPGSVEEAEEAEPDEEFKDAIEEDDEGTP) are disordered. The interval 271–354 (TPGSVEEAEE…GCAATFSVLK (84 aa)) is necessary for interaction with KIF5A. Residues 276-299 (EEAEEAEPDEEFKDAIEEDDEGTP) show a composition bias toward acidic residues. The tract at residues 286–292 (EFKDAIE) is necessary for interaction with VAPA. Residues 337–403 (TNNFGNCAGC…VCASCNQTLS (67 aa)) form an FYVE-type zinc finger. 8 residues coordinate Zn(2+): Cys-343, Cys-346, Cys-359, Cys-362, Cys-367, Cys-370, Cys-395, and Cys-398.

Can form homooligomers (monomers, dimers and tetramers). Interacts with FKBP8; may negatively regulate ZFYVE27 phosphorylation. Interacts with VAPA (via MSP domain); may regulate ZFYVE27 retention in the endoplasmic reticulum and its function in cell projections formation. Interacts with VAPB (via MSP domain). Interacts with RAB11A (GDP-bound form); regulates RAB11A. Interacts with RAB11B (GDP-bound form), REEP1, REEP5, ATL1, ATL2, ATL3, SPAST, SURF4, KIF5A, KIF5B, KIF5C and RTN3. Post-translationally, phosphorylated. Phosphorylation is induced by NGF through the MAPK/ERK pathway and modulates interaction with RAB11A.

It localises to the recycling endosome membrane. It is found in the endoplasmic reticulum membrane. Its subcellular location is the cell projection. The protein resides in the growth cone membrane. In terms of biological role, key regulator of RAB11-dependent vesicular trafficking during neurite extension through polarized membrane transport. Promotes axonal elongation and contributes to the establishment of neuronal cell polarity. Involved in nerve growth factor-induced neurite formation in VAPA-dependent manner. Contributes to both the formation and stabilization of the tubular ER network. Involved in ER morphogenesis by regulating the sheet-to-tubule balance and possibly the density of tubule interconnections. Acts as an adapter protein that facilitates the interaction of KIF5A with VAPA, VAPB, SURF4, RAB11A, RAB11B and RTN3 and the ZFYVE27-KIF5A complex contributes to the transport of these proteins in neurons. Can induce formation of neurite-like membrane protrusions in non-neuronal cells in a KIF5A/B-dependent manner. The chain is Protrudin (Zfyve27) from Rattus norvegicus (Rat).